A 76-amino-acid polypeptide reads, in one-letter code: ATP synthase subunit 9, mitochondrial (76 aa).

A run of 2 helical transmembrane segments spans residues 14–34 (ISTI…AALI) and 52–72 (ILGF…SFLL).

This sequence belongs to the ATPase C chain family. F-type ATPases have 2 components, CF(1) - the catalytic core - and CF(0) - the membrane proton channel. CF(1) has five subunits: alpha(3), beta(3), gamma(1), delta(1), epsilon(1). CF(0) has three main subunits: a, b and c.

The protein localises to the mitochondrion membrane. Mitochondrial membrane ATP synthase (F(1)F(0) ATP synthase or Complex V) produces ATP from ADP in the presence of a proton gradient across the membrane which is generated by electron transport complexes of the respiratory chain. F-type ATPases consist of two structural domains, F(1) - containing the extramembraneous catalytic core and F(0) - containing the membrane proton channel, linked together by a central stalk and a peripheral stalk. During catalysis, ATP synthesis in the catalytic domain of F(1) is coupled via a rotary mechanism of the central stalk subunits to proton translocation. Part of the complex F(0) domain. A homomeric c-ring of probably 10 subunits is part of the complex rotary element. This Vanderwaltozyma polyspora (strain ATCC 22028 / DSM 70294 / BCRC 21397 / CBS 2163 / NBRC 10782 / NRRL Y-8283 / UCD 57-17) (Kluyveromyces polysporus) protein is ATP synthase subunit 9, mitochondrial (ATP9).